We begin with the raw amino-acid sequence, 503 residues long: Cobyric acid synthase (503 aa).

In terms of domain architecture, GATase cobBQ-type spans 255–444 (DIDIAVIRYP…FHDLFHNDAF (190 aa)). The Nucleophile role is filled by Cys337. His436 is a catalytic residue.

Belongs to the CobB/CobQ family. CobQ subfamily.

It functions in the pathway cofactor biosynthesis; adenosylcobalamin biosynthesis. In terms of biological role, catalyzes amidations at positions B, D, E, and G on adenosylcobyrinic A,C-diamide. NH(2) groups are provided by glutamine, and one molecule of ATP is hydrogenolyzed for each amidation. The sequence is that of Cobyric acid synthase from Geobacillus sp. (strain WCH70).